The primary structure comprises 201 residues: Ribonuclease HII (201 aa).

Positions 15–201 (AIIAGVDEAG…FAPIKAYGAP (187 aa)) constitute an RNase H type-2 domain. 3 residues coordinate a divalent metal cation: Asp-21, Glu-22, and Asp-113.

It belongs to the RNase HII family. Mn(2+) serves as cofactor. Mg(2+) is required as a cofactor.

The protein localises to the cytoplasm. It catalyses the reaction Endonucleolytic cleavage to 5'-phosphomonoester.. Endonuclease that specifically degrades the RNA of RNA-DNA hybrids. This is Ribonuclease HII from Bordetella pertussis (strain Tohama I / ATCC BAA-589 / NCTC 13251).